Reading from the N-terminus, the 554-residue chain is CTP synthase (554 aa).

The tract at residues 1-265 (MTPLIFVTGG…DEIVIDQFKL (265 aa)) is amidoligase domain. Serine 13 provides a ligand contact to CTP. UTP is bound at residue serine 13. ATP is bound by residues 14–19 (SLGKGI) and aspartate 71. Mg(2+) contacts are provided by aspartate 71 and glutamate 139. CTP-binding positions include 146-148 (DIE), 186-191 (KTKPTQ), and lysine 222. UTP-binding positions include 186 to 191 (KTKPTQ) and lysine 222. The 254-residue stretch at 292–545 (TIAVVGKYVD…VKASRARKAG (254 aa)) folds into the Glutamine amidotransferase type-1 domain. L-glutamine is bound at residue glycine 353. The active-site Nucleophile; for glutamine hydrolysis is the cysteine 380. L-glutamine contacts are provided by residues 381 to 384 (YGMQ), glutamate 404, and arginine 471. Active-site residues include histidine 518 and glutamate 520.

Belongs to the CTP synthase family. In terms of assembly, homotetramer.

The enzyme catalyses UTP + L-glutamine + ATP + H2O = CTP + L-glutamate + ADP + phosphate + 2 H(+). It catalyses the reaction L-glutamine + H2O = L-glutamate + NH4(+). The catalysed reaction is UTP + NH4(+) + ATP = CTP + ADP + phosphate + 2 H(+). It functions in the pathway pyrimidine metabolism; CTP biosynthesis via de novo pathway; CTP from UDP: step 2/2. Its activity is regulated as follows. Allosterically activated by GTP, when glutamine is the substrate; GTP has no effect on the reaction when ammonia is the substrate. The allosteric effector GTP functions by stabilizing the protein conformation that binds the tetrahedral intermediate(s) formed during glutamine hydrolysis. Inhibited by the product CTP, via allosteric rather than competitive inhibition. Its function is as follows. Catalyzes the ATP-dependent amination of UTP to CTP with either L-glutamine or ammonia as the source of nitrogen. Regulates intracellular CTP levels through interactions with the four ribonucleotide triphosphates. This chain is CTP synthase, found in Xylella fastidiosa (strain M23).